We begin with the raw amino-acid sequence, 365 residues long: Ribosomal RNA large subunit methyltransferase F (365 aa).

The disordered stretch occupies residues Met1–Ala50. Residues Ala33–Ala50 show a composition bias toward basic and acidic residues.

This sequence belongs to the methyltransferase superfamily. METTL16/RlmF family.

It localises to the cytoplasm. The catalysed reaction is adenosine(1618) in 23S rRNA + S-adenosyl-L-methionine = N(6)-methyladenosine(1618) in 23S rRNA + S-adenosyl-L-homocysteine + H(+). Functionally, specifically methylates the adenine in position 1618 of 23S rRNA. This is Ribosomal RNA large subunit methyltransferase F from Shewanella baltica (strain OS155 / ATCC BAA-1091).